Consider the following 394-residue polypeptide: MSKSDFWILSVPSRGGSNADLCDDIERLLVSGSTSLISTVAPFDVPPFKVESLDVLISQSEQLTKQDAQCASAISKISDIIKNTVSSSSGDLKDYFMVQDKSPLEYVSSFAWNSSRFHMNKTISEISDRITSEIISFENDIRTRQTSFQQASSAFQNMQKKQSGNLSQKSLANIVHEEDVVHGSDYLTNVFIAVPLNLEKQFLNSYETLTDLVIPRSAKKLDQDSEFVLYTVVVFKKTADSFITKAREAKYTIREFTFEQGLRETEQSEFDDAAVKEKRMLSSLLRYASIAFSESFQGWIHLKCLCVYVESILRYGLPPDFSSVIFQPMAKSEVKIKNILLSKYAYLAQNPVGNNKVKNVDSSAGLDESMADLNLDEEYLPFVLFTVPSKVFNY.

S17 is modified (phosphoserine).

Belongs to the V-ATPase C subunit family. In terms of assembly, V-ATPase is a heteromultimeric enzyme composed of a peripheral catalytic V1 complex (components A to H) attached to an integral membrane V0 proton pore complex (components: a, c, c', c'', d, e, f and VOA1).

The protein resides in the cytoplasm. It localises to the vacuole membrane. Its function is as follows. Subunit of the V1 complex of vacuolar(H+)-ATPase (V-ATPase), a multisubunit enzyme composed of a peripheral complex (V1) that hydrolyzes ATP and a membrane integral complex (V0) that translocates protons. V-ATPase is responsible for acidifying and maintaining the pH of intracellular compartments. Subunit C is necessary for the assembly of the catalytic sector of the enzyme and is likely to have a specific function in its catalytic activity. Reversibly leaves the enzyme after glucose depletion, causing the catalytic subcomplex V1 to detach from the V0 section. In Schizosaccharomyces pombe (strain 972 / ATCC 24843) (Fission yeast), this protein is V-type proton ATPase subunit C.